The sequence spans 1005 residues: MIMDNQKSTSKTTLLKLMLLRAWKERWTDCQWGINVKAVLTRGVSGDVYNLADCILQQAVVGSGANTLFLSYLKHSLCAHLISHAAVLKRISKYDHFEMHHCLIALLEFLESIIGGVTCRGKQEEGLLTKAMLSLVYWLMQIYEHAIETFSENRSLTTEQQEVVEKTANVLEKIVQSQFLLGVVFVGKFEDPELFGMLAKKCLEIENLTVKSGFVPPVVSQKNVTVNDYIRKVASIETETLEIKEFDGKGVEPITYCMQPLIAIDILFNPNCDTQMYVLEFLSIQALKGFPLSRLYCEIIRACLTCLNNVSGTSRESYICAFTFIKVPQIMRQIHLQTRVLTPNDFEDAKLDYSPDVVEAFELLLQDSAILDFMDAKCACNTVEYLLNEMLKHHLINEKYSKLIAAKRDGITSSLQKLDLNTNQHSIVKFVLRAEPPLVGILKTLSSDYNKVQEALLGMLCQVLSGNSFELILSVATVEGKLKTFVAGLIKCNENSKQVPGEMGKPAMTRAALFDVSFLMLVFIVQNYGSEGVLTDGTDSFFEKWVRECMVEKHKSKSPMNMVKLCDQNKVDELIVSLNSPDGLKATSLKWQEICANIPGLLYQVLLAWENETLSTGEIKKFLDSLKSRFCCFSICATSWLCAYMQIIRQDELLKPMNMIQQFVTNISSEEMMQQEYLKERLGLTVQIIRKMQIDFQRLPVASPKMRNQLQSQSLVSQAPLEEQFEEVWKGVLEKGWLPIEATLALENLLQSCGPFWLVDKLVQQIFHCKYIREMNKTMDIVFAIMHLDIERCTIALLSQLVPMMLLNKLQISEIVDPFSRVLAKLCVYCIVATMEAPAVPTKKRSRAAITAEGDELDTLCSTPKMRKIGSESCDSSSSDFMLEQVLAARDNPAPLKEPLQGCLQTLFRTFSQYIVSDELSPKIFFMFQLLSLLVEVGKDRIKPVLKLIPNGLIQNMMKINATDDMTVGFILRLYDLNTASGRQFAMSDLCLFRNIQMRKDSIKL.

It belongs to the Mediator complex subunit 24 family. As to quaternary structure, component of the Mediator complex.

It is found in the nucleus. Functionally, component of the Mediator complex, a coactivator involved in the regulated transcription of nearly all RNA polymerase II-dependent genes. Mediator functions as a bridge to convey information from gene-specific regulatory proteins to the basal RNA polymerase II transcription machinery. Mediator is recruited to promoters by direct interactions with regulatory proteins and serves as a scaffold for the assembly of a functional preinitiation complex with RNA polymerase II and the general transcription factors. In Aedes aegypti (Yellowfever mosquito), this protein is Mediator of RNA polymerase II transcription subunit 24 (MED24).